The chain runs to 222 residues: Charged multivesicular body protein 3 (222 aa).

The N-myristoyl glycine moiety is linked to residue G2. An intramolecular interaction with C-terminus region spans residues 2-113 (GLFGKTQEKP…LQKSTEVMKA (112 aa)). A coiled-coil region spans residues 22 to 54 (KIRKEMRVVDRQIRDIQREEEKVKRSVKDAAKK). Important for autoinhibitory function stretches follow at residues 59-64 (VCVVLA) and 168-169 (IL). Positions 149–222 (ESMDDQEEME…MQSRLATLRS (74 aa)) form a coiled coil. Positions 151 to 220 (MDDQEEMEEA…EAMQSRLATL (70 aa)) are intramolecular interaction with N-terminus. Residues 151–222 (MDDQEEMEEA…MQSRLATLRS (72 aa)) form an interaction with VPS4A region. K179 participates in a covalent cross-link: Glycyl lysine isopeptide (Lys-Gly) (interchain with G-Cter in ubiquitin). Residues 180 to 222 (APSKVTDALPEPEPLGAMAASEDEEEEEEALEAMQSRLATLRS) are disordered. 3 interaction with STAMBP regions span residues 196–222 (AMAASEDEEEEEEALEAMQSRLATLRS), 203–207 (EEEEE), and 221–222 (RS). S200 carries the post-translational modification Phosphoserine. The segment covering 200–210 (SEDEEEEEEAL) has biased composition (acidic residues). Residues 201-211 (EDEEEEEEALE) carry the MIT-interacting motif motif.

Belongs to the SNF7 family. As to quaternary structure, probable core component of the endosomal sorting required for transport complex III (ESCRT-III). ESCRT-III components are thought to multimerize to form a flat lattice on the perimeter membrane of the endosome. Several assembly forms of ESCRT-III may exist that interact and act sequentially. Forms a metastable monomer in solution; its core structure (without part of the putative autoinhibitory C-terminal acidic region) oligomerizes into a flat lattice via two different dimerization interfaces. In vitro, heteromerizes with CHMP2A (but not CHMP4) to form helical tubular structures that expose membrane-interacting sites on the outside whereas VPS4B can associate on the inside of the tubule. May interact with IGFBP7; the relevance of such interaction however remains unclear. Interacts with CHMP2A. Interacts with CHMP4A; the interaction requires the release of CHMP4A autoinhibition. Interacts with VPS4A. Interacts with STAMBP; the interaction appears to relieve the autoinhibition of CHMP3. Interacts with VTA1.

Its subcellular location is the cytoplasm. The protein resides in the cytosol. It is found in the membrane. The protein localises to the endosome. It localises to the late endosome membrane. Its function is as follows. Probable core component of the endosomal sorting required for transport complex III (ESCRT-III) which is involved in multivesicular bodies (MVBs) formation and sorting of endosomal cargo proteins into MVBs. MVBs contain intraluminal vesicles (ILVs) that are generated by invagination and scission from the limiting membrane of the endosome and mostly are delivered to lysosomes enabling degradation of membrane proteins, such as stimulated growth factor receptors, lysosomal enzymes and lipids. The MVB pathway appears to require the sequential function of ESCRT-O, -I,-II and -III complexes. ESCRT-III proteins mostly dissociate from the invaginating membrane before the ILV is released. The ESCRT machinery also functions in topologically equivalent membrane fission events, such as the terminal stages of cytokinesis and the budding of enveloped viruses (lentiviruses). ESCRT-III proteins are believed to mediate the necessary vesicle extrusion and/or membrane fission activities, possibly in conjunction with the AAA ATPase VPS4. Selectively binds to phosphatidylinositol 3,5-bisphosphate PtdIns(3,5)P2 and PtdIns(3,4)P2 in preference to other phosphoinositides tested. Involved in late stages of cytokinesis. Plays a role in endosomal sorting/trafficking of EGF receptor. This chain is Charged multivesicular body protein 3 (CHMP3), found in Bos taurus (Bovine).